A 252-amino-acid polypeptide reads, in one-letter code: Imidazole glycerol phosphate synthase subunit HisF (252 aa).

Catalysis depends on residues D11 and D130.

This sequence belongs to the HisA/HisF family. Heterodimer of HisH and HisF.

The protein localises to the cytoplasm. The catalysed reaction is 5-[(5-phospho-1-deoxy-D-ribulos-1-ylimino)methylamino]-1-(5-phospho-beta-D-ribosyl)imidazole-4-carboxamide + L-glutamine = D-erythro-1-(imidazol-4-yl)glycerol 3-phosphate + 5-amino-1-(5-phospho-beta-D-ribosyl)imidazole-4-carboxamide + L-glutamate + H(+). Its pathway is amino-acid biosynthesis; L-histidine biosynthesis; L-histidine from 5-phospho-alpha-D-ribose 1-diphosphate: step 5/9. IGPS catalyzes the conversion of PRFAR and glutamine to IGP, AICAR and glutamate. The HisF subunit catalyzes the cyclization activity that produces IGP and AICAR from PRFAR using the ammonia provided by the HisH subunit. This is Imidazole glycerol phosphate synthase subunit HisF from Azoarcus sp. (strain BH72).